The sequence spans 134 residues: Small ribosomal subunit protein uS12 (134 aa).

Residues 1–26 (MPTIQQLVRKGRESFADKSKSPALNS) are disordered. Over residues 10 to 20 (KGRESFADKSK) the composition is skewed to basic and acidic residues. The residue at position 89 (D89) is a 3-methylthioaspartic acid. Residues 103–134 (DTAGVNGRTQRRSKYGAKRPKPGQAPAAKGKK) form a disordered region. The span at 111–123 (TQRRSKYGAKRPK) shows a compositional bias: basic residues. Over residues 124–134 (PGQAPAAKGKK) the composition is skewed to low complexity.

It belongs to the universal ribosomal protein uS12 family. As to quaternary structure, part of the 30S ribosomal subunit. Contacts proteins S8 and S17. May interact with IF1 in the 30S initiation complex.

In terms of biological role, with S4 and S5 plays an important role in translational accuracy. Interacts with and stabilizes bases of the 16S rRNA that are involved in tRNA selection in the A site and with the mRNA backbone. Located at the interface of the 30S and 50S subunits, it traverses the body of the 30S subunit contacting proteins on the other side and probably holding the rRNA structure together. The combined cluster of proteins S8, S12 and S17 appears to hold together the shoulder and platform of the 30S subunit. The chain is Small ribosomal subunit protein uS12 from Porphyromonas gingivalis (strain ATCC BAA-308 / W83).